Consider the following 496-residue polypeptide: Neuronal acetylcholine receptor subunit beta-4 (496 aa).

A signal peptide spans 1–19 (MRSALPLVLFSLVALCGRG). Residues 20–236 (DCRVANAEEK…IIKRKPLFYT (217 aa)) lie on the Extracellular side of the membrane. N-linked (GlcNAc...) asparagine glycosylation is found at Asn36, Asn93, Asn138, and Asn166. A disulfide bridge connects residues Cys153 and Cys167. A helical membrane pass occupies residues 237 to 257 (INLIIPCVLITSLAILVFYLP). Residues 258 to 265 (SDCGEKMT) lie on the Cytoplasmic side of the membrane. Glu262 is a binding site for Na(+). Residues 266–286 (LCISVLLALTVFLLLISKIVP) traverse the membrane as a helical segment. The Extracellular segment spans residues 287–298 (PTSLNVPLIGKY). The helical transmembrane segment at 299–319 (LMFTMVLVTFSIVTSVCVLNV) threads the bilayer. The Cytoplasmic segment spans residues 320 to 464 (HHRSPSTHTM…WKYVAMVVDR (145 aa)). A helical transmembrane segment spans residues 465–485 (LFLWVFVVVCVLGTVGLFLPP). Residues 486–496 (LFQTHTPSEEP) are Extracellular-facing.

It belongs to the ligand-gated ion channel (TC 1.A.9) family. Acetylcholine receptor (TC 1.A.9.1) subfamily. Beta-4/CHRNB4 sub-subfamily. As to quaternary structure, neuronal AChR is composed of two different types of subunits: alpha and beta. CHRNB4/Beta-4 subunit can be combined to CHRNA2/alpha-2, CHRNA3/alpha-3 or CHRNA4/alpha-4, CHRNA5/alpha-5 and CHRNB3/beta-3 to give rise to functional receptors. Forms stoichiometries such as (CHRNA3)2:(CHRNB4)3 or (CHRNA3:CHRNB4)2:CHRNB3. Interacts with RIC3; which is required for proper folding and assembly. Interacts with LYPD6.

The protein localises to the synaptic cell membrane. Its subcellular location is the cell membrane. It catalyses the reaction Ca(2+)(in) = Ca(2+)(out). The catalysed reaction is K(+)(in) = K(+)(out). It carries out the reaction Na(+)(in) = Na(+)(out). In terms of biological role, component of neuronal acetylcholine receptors (nAChRs) that function as pentameric, ligand-gated cation channels with high calcium permeability among other activities. nAChRs are excitatory neurotrasnmitter receptors formed by a collection of nAChR subunits known to mediate synaptic transmission in the nervous system and the neuromuscular junction. Each nAchR subunit confers differential attributes to channel properties, including activation, deactivation and desensitization kinetics, pH sensitivity, cation permeability, and binding to allosteric modulators. CHRNB4 forms heteropentameric neuronal acetylcholine receptors with CHRNA2, CHRNA3 and CHRNA4, as well as CHRNA5 and CHRNB3 as accesory subunits. CHRNA3:CHRNB4 being predominant in neurons of the autonomic ganglia, it is known as ganglionic nicotinic receptor. CHRNA3:CHRNB4 or CHRNA3:CHRNA5:CHRNB4 play also an important role in the habenulo-interpeduncular tract, modulating the mesolimbic dopamine system and affecting reward circuits and addiction. Hypothalamic CHRNA3:CHRNB4 nAChR activation by nicotine leads to activation of POMC neurons and a decrease in food intake. This chain is Neuronal acetylcholine receptor subunit beta-4 (CHRNB4), found in Bos taurus (Bovine).